Reading from the N-terminus, the 1277-residue chain is NPC intracellular cholesterol transporter 1 (1277 aa).

Positions M1 to S22 are cleaved as a signal peptide. Over Q23–Y269 the chain is Lumenal. Disulfide bonds link C25–C74, C31–C42, C63–C109, C75–C113, C97–C238, C100–C160, C177–C184, C227–C243, and C240–C247. N41 contributes to the cholesterol binding site. N-linked (GlcNAc...) asparagine glycosylation is present at N70. Residue Q79 participates in cholesterol binding. Residues N122 and N135 are each glycosylated (N-linked (GlcNAc...) asparagine). The tract at residues L175 to I205 is important for cholesterol binding and cholesterol transfer from NPC1 to liposomes. Residues N185 and N222 are each glycosylated (N-linked (GlcNAc...) asparagine). Residues V270 to V290 form a helical membrane-spanning segment. Topologically, residues W291–P350 are cytoplasmic. Residues G351 to I371 traverse the membrane as a helical segment. Over R372 to L621 the chain is Lumenal. 4 N-linked (GlcNAc...) asparagine glycosylation sites follow: N415, N452, N459, and N478. 2 disulfides stabilise this stretch: C468–C479 and C516–C533. The SSD domain maps to D620–L785. The helical transmembrane segment at F622–I642 threads the bilayer. The Cytoplasmic segment spans residues K643–K653. The chain crosses the membrane as a helical span at residues I654–I674. The Lumenal segment spans residues F675 to Y677. The helical transmembrane segment at I678 to G698 threads the bilayer. At V699–S734 the chain is on the cytoplasmic side. Residues M735–P755 form a helical membrane-spanning segment. The Lumenal segment spans residues A756–T759. The helical transmembrane segment at F760 to V780 threads the bilayer. Topologically, residues S781 to D832 are cytoplasmic. Residues W833 to L853 form a helical membrane-spanning segment. Residues N854–T1097 lie on the Lumenal side of the membrane. N898 carries N-linked (GlcNAc...) asparagine glycosylation. Residues C909 and C914 are joined by a disulfide bond. N-linked (GlcNAc...) asparagine glycans are attached at residues N916, N931, N961, N968, N1028, and N1063. Intrachain disulfides connect C956–C1011, C957–C979, and C967–C976. A helical transmembrane segment spans residues I1098 to C1118. The Cytoplasmic segment spans residues E1119–T1123. A helical transmembrane segment spans residues V1124–W1144. A topological domain (lumenal) is located at residue G1145. A helical membrane pass occupies residues I1146–F1166. At C1167–G1194 the chain is on the cytoplasmic side. A helical membrane pass occupies residues S1195–A1215. Residues K1216–R1226 lie on the Lumenal side of the membrane. A helical membrane pass occupies residues M1227–L1247. Residues S1248–F1277 are Cytoplasmic-facing. The interval L1274–F1277 is required for location in lysosomes. The Di-leucine motif motif lies at L1274–F1277.

Belongs to the patched family. As to quaternary structure, interacts (via the second lumenal domain) with NPC2. Interacts with TMEM97; the interaction may decrease NPC1 availability to the cell. Interacts with TIM1. Interacts with SLC38A9; this interaction inhibits cholesterol-mediated mTORC1 activation via its sterol transport activity. Post-translationally, N-glycosylated. In terms of tissue distribution, detected in corpus luteum, granulosa cells and adrenal gland.

It localises to the late endosome membrane. It is found in the lysosome membrane. It carries out the reaction cholesterol(in) = cholesterol(out). Its function is as follows. Intracellular cholesterol transporter which acts in concert with NPC2 and plays an important role in the egress of cholesterol from the endosomal/lysosomal compartment. Unesterified cholesterol that has been released from LDLs in the lumen of the late endosomes/lysosomes is transferred by NPC2 to the cholesterol-binding pocket in the N-terminal domain of NPC1. Cholesterol binds to NPC1 with the hydroxyl group buried in the binding pocket. Binds oxysterol with higher affinity than cholesterol. May play a role in vesicular trafficking in glia, a process that may be crucial for maintaining the structural and functional integrity of nerve terminals. Inhibits cholesterol-mediated mTORC1 activation throught its interaction with SLC38A9. The protein is NPC intracellular cholesterol transporter 1 of Sus scrofa (Pig).